The following is a 219-amino-acid chain: MKAIVPFKVVNVKSRLASLLTPEERSELAKLMLRDITSTLAAAGVEVELLTTQPFEWDGATVIVSEKELNPALNDYLLANDSPVMIVMADIPLITEKNVRDMLASPADIVICPGRGGGTNVQLIRRPDKYHVDYYGASFMDHMRIAQENGLTTEVFDSFNVSSDIDEAGDLIELYIHGKGDAAKYLRSITVLDDSKGRVRVVKEESNLRAVRIPGKMTG.

It belongs to the CofC family. As to quaternary structure, homodimer.

The catalysed reaction is (2S)-2-phospholactate + GTP + H(+) = (2S)-lactyl-2-diphospho-5'-guanosine + diphosphate. The protein operates within cofactor biosynthesis; coenzyme F420 biosynthesis. In terms of biological role, guanylyltransferase that catalyzes the activation of (2S)-2-phospholactate (2-PL) as (2S)-lactyl-2-diphospho-5'-guanosine, via the condensation of 2-PL with GTP. It is involved in the biosynthesis of coenzyme F420, a hydride carrier cofactor. The protein is 2-phospho-L-lactate guanylyltransferase of Methanocella arvoryzae (strain DSM 22066 / NBRC 105507 / MRE50).